We begin with the raw amino-acid sequence, 972 residues long: Macrophage colony-stimulating factor 1 receptor (972 aa).

Positions 1–19 (MGPGVLLLLLVATAWHGQG) are cleaved as a signal peptide. At 20–517 (IPVIEPSVPE…HPPDEFLFTP (498 aa)) the chain is on the extracellular side. 5 consecutive Ig-like C2-type domains span residues 21–104 (PVIE…VKDP), 107–197 (PWNV…KVQK), 203–290 (PALT…HSTS), 299–399 (AYLN…LTLR), and 402–502 (PEVS…IPIS). Intrachain disulfides connect Cys-42/Cys-84, Cys-127/Cys-177, and Cys-224/Cys-278. 11 N-linked (GlcNAc...) asparagine glycosylation sites follow: Asn-45, Asn-73, Asn-153, Asn-240, Asn-275, Asn-302, Asn-335, Asn-353, Asn-412, Asn-428, and Asn-480. Cysteines 419 and 485 form a disulfide. The helical transmembrane segment at 518 to 538 (VVVACMSIMALLLLLLLLLLY) threads the bilayer. Residues 539 to 972 (KYKQKPKYQV…LLQPNNYQFC (434 aa)) lie on the Cytoplasmic side of the membrane. Residues 542-574 (QKPKYQVRWKIIESYEGNSYTFIDPTQLPYNEK) form a regulatory juxtamembrane domain region. Phosphotyrosine; by autocatalysis occurs at positions 546 and 561. In terms of domain architecture, Protein kinase spans 582-910 (LQFGKTLGAG…PTFQQICSFL (329 aa)). Residues 588–596 (LGAGAFGKV) and Lys-616 contribute to the ATP site. Tyr-699 and Tyr-708 each carry phosphotyrosine; by autocatalysis. A Phosphoserine modification is found at Ser-713. Tyr-723 bears the Phosphotyrosine; by autocatalysis mark. Asp-778 functions as the Proton acceptor in the catalytic mechanism. The tract at residues 796–818 (DFGLARDIMNDSNYIVKGNARLP) is activation loop. A phosphotyrosine; by autocatalysis mark is found at Tyr-809 and Tyr-923. The interval 918-950 (RRERDYTNLPSSSRSGGSGSSSSELEEESSSEH) is disordered. The segment covering 928-940 (SSSRSGGSGSSSS) has biased composition (low complexity). Tyr-969 carries the phosphotyrosine; by autocatalysis modification.

This sequence belongs to the protein kinase superfamily. Tyr protein kinase family. CSF-1/PDGF receptor subfamily. In terms of assembly, interacts with INPPL1/SHIP2 and THOC5. Monomer. Homodimer. Interacts with CSF1 and IL34. Interaction with dimeric CSF1 or IL34 leads to receptor homodimerization. Interacts (tyrosine phosphorylated) with PLCG2 (via SH2 domain). Interacts (tyrosine phosphorylated) with PIK3R1 (via SH2 domain). Interacts (tyrosine phosphorylated) with FYN, YES1 and SRC (via SH2 domain). Interacts (tyrosine phosphorylated) with CBL, GRB2 and SLA2. Post-translationally, autophosphorylated in response to CSF1 or IL34 binding. Phosphorylation at Tyr-561 is important for normal down-regulation of signaling by ubiquitination, internalization and degradation. Phosphorylation at Tyr-561 and Tyr-809 is important for interaction with SRC family members, including FYN, YES1 and SRC, and for subsequent activation of these protein kinases. Phosphorylation at Tyr-699 and Tyr-923 is important for interaction with GRB2. Phosphorylation at Tyr-723 is important for interaction with PIK3R1. Phosphorylation at Tyr-708 is important for normal receptor degradation. Phosphorylation at Tyr-723 and Tyr-809 is important for interaction with PLCG2. Phosphorylation at Tyr-969 is important for interaction with CBL. Dephosphorylation by PTPN2 negatively regulates downstream signaling and macrophage differentiation. In terms of processing, ubiquitinated. Becomes rapidly polyubiquitinated after autophosphorylation, leading to its degradation. Expressed in bone marrow and in differentiated blood mononuclear cells.

It localises to the cell membrane. The enzyme catalyses L-tyrosyl-[protein] + ATP = O-phospho-L-tyrosyl-[protein] + ADP + H(+). With respect to regulation, present in an inactive conformation in the absence of bound ligand. CSF1 or IL34 binding leads to dimerization and activation by autophosphorylation on tyrosine residues. Inhibited by imatinib/STI-571 (Gleevec), dasatinib, sunitinib/SU11248, lestaurtinib/CEP-701, midostaurin/PKC-412, Ki20227, linifanib/ABT-869, Axitinib/AG013736, sorafenib/BAY 43-9006 and GW2580. Functionally, tyrosine-protein kinase that acts as a cell-surface receptor for CSF1 and IL34 and plays an essential role in the regulation of survival, proliferation and differentiation of hematopoietic precursor cells, especially mononuclear phagocytes, such as macrophages and monocytes. Promotes the release of pro-inflammatory chemokines in response to IL34 and CSF1, and thereby plays an important role in innate immunity and in inflammatory processes. Plays an important role in the regulation of osteoclast proliferation and differentiation, the regulation of bone resorption, and is required for normal bone and tooth development. Required for normal male and female fertility, and for normal development of milk ducts and acinar structures in the mammary gland during pregnancy. Promotes reorganization of the actin cytoskeleton, regulates formation of membrane ruffles, cell adhesion and cell migration, and promotes cancer cell invasion. Activates several signaling pathways in response to ligand binding, including the ERK1/2 and the JNK pathway. Phosphorylates PIK3R1, PLCG2, GRB2, SLA2 and CBL. Activation of PLCG2 leads to the production of the cellular signaling molecules diacylglycerol and inositol 1,4,5-trisphosphate, that then lead to the activation of protein kinase C family members, especially PRKCD. Phosphorylation of PIK3R1, the regulatory subunit of phosphatidylinositol 3-kinase, leads to activation of the AKT1 signaling pathway. Activated CSF1R also mediates activation of the MAP kinases MAPK1/ERK2 and/or MAPK3/ERK1, and of the SRC family kinases SRC, FYN and YES1. Activated CSF1R transmits signals both via proteins that directly interact with phosphorylated tyrosine residues in its intracellular domain, or via adapter proteins, such as GRB2. Promotes activation of STAT family members STAT3, STAT5A and/or STAT5B. Promotes tyrosine phosphorylation of SHC1 and INPP5D/SHIP-1. Receptor signaling is down-regulated by protein phosphatases, such as INPP5D/SHIP-1, that dephosphorylate the receptor and its downstream effectors, and by rapid internalization of the activated receptor. In the central nervous system, may play a role in the development of microglia macrophages. The sequence is that of Macrophage colony-stimulating factor 1 receptor (CSF1R) from Homo sapiens (Human).